The primary structure comprises 332 residues: Lipoyl synthase (332 aa).

Residues cysteine 74, cysteine 79, cysteine 85, cysteine 100, cysteine 104, cysteine 107, and serine 314 each contribute to the [4Fe-4S] cluster site. The Radical SAM core domain occupies 85-303 (CFGKGTATFM…EEEAYKMGFT (219 aa)).

This sequence belongs to the radical SAM superfamily. Lipoyl synthase family. The cofactor is [4Fe-4S] cluster.

Its subcellular location is the cytoplasm. It carries out the reaction [[Fe-S] cluster scaffold protein carrying a second [4Fe-4S](2+) cluster] + N(6)-octanoyl-L-lysyl-[protein] + 2 oxidized [2Fe-2S]-[ferredoxin] + 2 S-adenosyl-L-methionine + 4 H(+) = [[Fe-S] cluster scaffold protein] + N(6)-[(R)-dihydrolipoyl]-L-lysyl-[protein] + 4 Fe(3+) + 2 hydrogen sulfide + 2 5'-deoxyadenosine + 2 L-methionine + 2 reduced [2Fe-2S]-[ferredoxin]. The protein operates within protein modification; protein lipoylation via endogenous pathway; protein N(6)-(lipoyl)lysine from octanoyl-[acyl-carrier-protein]: step 2/2. Its function is as follows. Catalyzes the radical-mediated insertion of two sulfur atoms into the C-6 and C-8 positions of the octanoyl moiety bound to the lipoyl domains of lipoate-dependent enzymes, thereby converting the octanoylated domains into lipoylated derivatives. The chain is Lipoyl synthase from Paracidovorax citrulli (strain AAC00-1) (Acidovorax citrulli).